The sequence spans 304 residues: tRNA pseudouridine synthase B (304 aa).

The Nucleophile role is filled by Asp48.

This sequence belongs to the pseudouridine synthase TruB family. Type 1 subfamily.

The enzyme catalyses uridine(55) in tRNA = pseudouridine(55) in tRNA. Functionally, responsible for synthesis of pseudouridine from uracil-55 in the psi GC loop of transfer RNAs. The chain is tRNA pseudouridine synthase B from Pseudomonas aeruginosa (strain UCBPP-PA14).